A 235-amino-acid polypeptide reads, in one-letter code: Proteasome subunit beta type-1 (235 aa).

A propeptide spanning residues 1 to 20 is cleaved from the precursor; that stretch reads MSRLGFEQFPDYQVPGMKHP.

Belongs to the peptidase T1B family. As to quaternary structure, the 26S proteasome consists of a 20S proteasome core and two 19S regulatory subunits. The 20S proteasome core is composed of 28 subunits that are arranged in four stacked rings, resulting in a barrel-shaped structure. The two end rings are each formed by seven alpha subunits, and the two central rings are each formed by seven beta subunits. The catalytic chamber with the active sites is on the inside of the barrel.

It is found in the cytoplasm. The protein localises to the nucleus. Functionally, non-catalytic component of the proteasome, a multicatalytic proteinase complex which is characterized by its ability to cleave peptides with Arg, Phe, Tyr, Leu, and Glu adjacent to the leaving group at neutral or slightly basic pH. The proteasome has an ATP-dependent proteolytic activity. This Drosophila melanogaster (Fruit fly) protein is Proteasome subunit beta type-1 (Prosbeta6).